A 118-amino-acid chain; its full sequence is Peptidyl-tRNA hydrolase (118 aa).

Belongs to the PTH2 family.

The protein resides in the cytoplasm. The enzyme catalyses an N-acyl-L-alpha-aminoacyl-tRNA + H2O = an N-acyl-L-amino acid + a tRNA + H(+). The natural substrate for this enzyme may be peptidyl-tRNAs which drop off the ribosome during protein synthesis. The sequence is that of Peptidyl-tRNA hydrolase from Thermococcus onnurineus (strain NA1).